The chain runs to 715 residues: Methionine--tRNA ligase (715 aa).

The 'HIGH' region motif lies at 20–30 (PYANGKAHIGH). Positions 151, 154, 163, and 167 each coordinate Zn(2+). A 'KMSKS' region motif is present at residues 334-338 (KFSKT). Lys-337 contributes to the ATP binding site. Positions 559 to 593 (ANAKRNGVKGGEKEPSKSEGMGPSEASKASEKTVD) are disordered. Residues 613–715 (DFAKLDIRVG…KEIKSGSRIR (103 aa)) form the tRNA-binding domain.

Belongs to the class-I aminoacyl-tRNA synthetase family. MetG type 1 subfamily. As to quaternary structure, homodimer. Zn(2+) is required as a cofactor.

The protein resides in the cytoplasm. It carries out the reaction tRNA(Met) + L-methionine + ATP = L-methionyl-tRNA(Met) + AMP + diphosphate. Functionally, is required not only for elongation of protein synthesis but also for the initiation of all mRNA translation through initiator tRNA(fMet) aminoacylation. This chain is Methionine--tRNA ligase, found in Methanosarcina mazei (strain ATCC BAA-159 / DSM 3647 / Goe1 / Go1 / JCM 11833 / OCM 88) (Methanosarcina frisia).